Here is a 680-residue protein sequence, read N- to C-terminus: Zinc finger protein OBI1 (680 aa).

Positions 16–87 constitute a KRAB domain; it reads VSFEDVAVDF…AEATEQCLPG (72 aa). A C2H2-type 1; degenerate zinc finger spans residues 263-280; the sequence is CHKIFPNKTELSNHDAMH. C2H2-type zinc fingers lie at residues 455–477, 483–505, 511–533, 539–561, 567–589, 595–617, 623–645, and 651–673; these read FRCN…QRMH, HECK…QGIH, YECN…ERTH, FECK…QKIH, HKCK…QKTH, YECK…ETTH, and YECK…QVIH.

In terms of processing, polyubiquitinated, leading to its degradation via the ubiquitin-proteasome pathway. In terms of tissue distribution, expressed during osteogenic differentiation where levels increase from the first days of differentiation and remain high during the whole process. Highly expressed in lung.

It is found in the nucleus. Its function is as follows. May modulate osteogenic differentiation, at least in part, through the bone morphogenetic protein (BMP) signaling pathway, increasing RUNX2 activation and leading to osteoblast commitment and maturation. The polypeptide is Zinc finger protein OBI1 (ObI1) (Mus musculus (Mouse)).